We begin with the raw amino-acid sequence, 96 residues long: Glutamyl-tRNA(Gln) amidotransferase subunit C (96 aa).

This sequence belongs to the GatC family. As to quaternary structure, heterotrimer of A, B and C subunits.

It carries out the reaction L-glutamyl-tRNA(Gln) + L-glutamine + ATP + H2O = L-glutaminyl-tRNA(Gln) + L-glutamate + ADP + phosphate + H(+). The enzyme catalyses L-aspartyl-tRNA(Asn) + L-glutamine + ATP + H2O = L-asparaginyl-tRNA(Asn) + L-glutamate + ADP + phosphate + 2 H(+). Its function is as follows. Allows the formation of correctly charged Asn-tRNA(Asn) or Gln-tRNA(Gln) through the transamidation of misacylated Asp-tRNA(Asn) or Glu-tRNA(Gln) in organisms which lack either or both of asparaginyl-tRNA or glutaminyl-tRNA synthetases. The reaction takes place in the presence of glutamine and ATP through an activated phospho-Asp-tRNA(Asn) or phospho-Glu-tRNA(Gln). This Neisseria meningitidis serogroup B (strain ATCC BAA-335 / MC58) protein is Glutamyl-tRNA(Gln) amidotransferase subunit C.